A 137-amino-acid chain; its full sequence is Peptide methionine sulfoxide reductase MsrB (137 aa).

Positions 7–129 (PTENIEKLTD…NSASLNFVDD (123 aa)) constitute a MsrB domain. Zn(2+)-binding residues include Cys-46, Cys-49, Cys-95, and Cys-98. Cys-118 acts as the Nucleophile in catalysis.

This sequence belongs to the MsrB Met sulfoxide reductase family. Requires Zn(2+) as cofactor.

The catalysed reaction is L-methionyl-[protein] + [thioredoxin]-disulfide + H2O = L-methionyl-(R)-S-oxide-[protein] + [thioredoxin]-dithiol. In Yersinia enterocolitica serotype O:8 / biotype 1B (strain NCTC 13174 / 8081), this protein is Peptide methionine sulfoxide reductase MsrB.